A 245-amino-acid chain; its full sequence is Probable transcriptional regulatory protein NSE_0641 (245 aa).

The disordered stretch occupies residues 1-22 (MAGHSQYANIKHRKNAQDAKRA).

It belongs to the TACO1 family.

The protein resides in the cytoplasm. The polypeptide is Probable transcriptional regulatory protein NSE_0641 (Neorickettsia sennetsu (strain ATCC VR-367 / Miyayama) (Ehrlichia sennetsu)).